We begin with the raw amino-acid sequence, 460 residues long: Fumarate hydratase class II (460 aa).

Substrate-binding positions include 95 to 97 (SGT), 126 to 129 (HPND), 136 to 138 (SSN), and Thr184. The Proton donor/acceptor role is filled by His185. Ser315 is a catalytic residue. Residues Ser316 and 321-323 (KIN) each bind substrate.

Belongs to the class-II fumarase/aspartase family. Fumarase subfamily. As to quaternary structure, homotetramer.

It localises to the cytoplasm. The enzyme catalyses (S)-malate = fumarate + H2O. It functions in the pathway carbohydrate metabolism; tricarboxylic acid cycle; (S)-malate from fumarate: step 1/1. Its function is as follows. Involved in the TCA cycle. Catalyzes the stereospecific interconversion of fumarate to L-malate. The protein is Fumarate hydratase class II of Chlamydia caviae (strain ATCC VR-813 / DSM 19441 / 03DC25 / GPIC) (Chlamydophila caviae).